The primary structure comprises 297 residues: Large ribosomal subunit protein uL15m (297 aa).

A mitochondrion-targeting transit peptide spans 1 to 22 (MAGPVRGAAGPWALDLLRALPR). Residues 27–68 (NLRPNPGSRKPERRRRGQRRGRKCGRGHKGERQRGTRPRLGF) form a disordered region. Basic residues predominate over residues 37 to 53 (PERRRRGQRRGRKCGRG).

This sequence belongs to the universal ribosomal protein uL15 family. Component of the mitochondrial ribosome large subunit (39S) which comprises a 16S rRNA and about 50 distinct proteins.

The protein resides in the mitochondrion. The chain is Large ribosomal subunit protein uL15m (MRPL15) from Bos taurus (Bovine).